An 87-amino-acid polypeptide reads, in one-letter code: Small ribosomal subunit protein bS16 (87 aa).

Belongs to the bacterial ribosomal protein bS16 family.

This is Small ribosomal subunit protein bS16 from Fusobacterium nucleatum subsp. nucleatum (strain ATCC 25586 / DSM 15643 / BCRC 10681 / CIP 101130 / JCM 8532 / KCTC 2640 / LMG 13131 / VPI 4355).